The following is a 245-amino-acid chain: Leucyl/phenylalanyl-tRNA--protein transferase (245 aa).

It belongs to the L/F-transferase family.

It is found in the cytoplasm. The catalysed reaction is N-terminal L-lysyl-[protein] + L-leucyl-tRNA(Leu) = N-terminal L-leucyl-L-lysyl-[protein] + tRNA(Leu) + H(+). The enzyme catalyses N-terminal L-arginyl-[protein] + L-leucyl-tRNA(Leu) = N-terminal L-leucyl-L-arginyl-[protein] + tRNA(Leu) + H(+). It carries out the reaction L-phenylalanyl-tRNA(Phe) + an N-terminal L-alpha-aminoacyl-[protein] = an N-terminal L-phenylalanyl-L-alpha-aminoacyl-[protein] + tRNA(Phe). In terms of biological role, functions in the N-end rule pathway of protein degradation where it conjugates Leu, Phe and, less efficiently, Met from aminoacyl-tRNAs to the N-termini of proteins containing an N-terminal arginine or lysine. In Paraburkholderia phytofirmans (strain DSM 17436 / LMG 22146 / PsJN) (Burkholderia phytofirmans), this protein is Leucyl/phenylalanyl-tRNA--protein transferase.